Here is a 208-residue protein sequence, read N- to C-terminus: Putative dioxygenase RBE_0329 (208 aa).

It belongs to the intradiol ring-cleavage dioxygenase family.

The chain is Putative dioxygenase RBE_0329 from Rickettsia bellii (strain RML369-C).